Here is a 119-residue protein sequence, read N- to C-terminus: Large ribosomal subunit protein uL22c (119 aa).

It belongs to the universal ribosomal protein uL22 family. As to quaternary structure, part of the 50S ribosomal subunit.

It localises to the plastid. The protein localises to the chloroplast. In terms of biological role, this protein binds specifically to 23S rRNA. The globular domain of the protein is located near the polypeptide exit tunnel on the outside of the subunit, while an extended beta-hairpin is found that lines the wall of the exit tunnel in the center of the 70S ribosome. The chain is Large ribosomal subunit protein uL22c (rpl22) from Chlorokybus atmophyticus (Soil alga).